We begin with the raw amino-acid sequence, 163 residues long: Calcium-binding protein 2 (163 aa).

G2 is lipidated: N-myristoyl glycine. 4 consecutive EF-hand domains span residues 21-56, 72-89, 95-130, and 132-163; these read EEIEELQAAFQEFDRDRDGYIGYQELGACMRTLGYM, GKVDFEDFVELMGPKLLA, IGVRELRDAFREFDTNGDGCISLGELRAALKALLGE, and LSQREVDEILRDIDLNGDGLVDFEEFVRMMSR. Positions 34, 36, 38, 40, and 45 each coordinate Ca(2+). The Ca(2+) site is built by D108, N110, D112, C114, E119, D145, N147, D149, and E156.

It is found in the cytoplasm. Its subcellular location is the perinuclear region. The protein localises to the cell membrane. The protein resides in the golgi apparatus. Functionally, required for sound encoding at inner hair cells (IHCs) synapses, likely via inhibition of the inactivation of voltage-gated calcium channel of type 1.3 (Cav1.3) in the IHCs. Required for the normal transfer of light signals through the retina. In Bos taurus (Bovine), this protein is Calcium-binding protein 2 (CABP2).